The following is a 275-amino-acid chain: Urease accessory protein UreD (275 aa).

The protein belongs to the UreD family. In terms of assembly, ureD, UreF and UreG form a complex that acts as a GTP-hydrolysis-dependent molecular chaperone, activating the urease apoprotein by helping to assemble the nickel containing metallocenter of UreC. The UreE protein probably delivers the nickel.

It localises to the cytoplasm. Required for maturation of urease via the functional incorporation of the urease nickel metallocenter. The chain is Urease accessory protein UreD from Cereibacter sphaeroides (strain ATCC 17029 / ATH 2.4.9) (Rhodobacter sphaeroides).